The following is a 409-amino-acid chain: tRNA-specific 2-thiouridylase MnmA (409 aa).

Residues 43–50 and leucine 69 contribute to the ATP site; that span reads AMSGGVDS. Residue cysteine 137 is the Nucleophile of the active site. Cysteine 137 and cysteine 235 are disulfide-bonded. Glycine 161 contributes to the ATP binding site. An interaction with tRNA region spans residues 185 to 187; the sequence is KDQ. The active-site Cysteine persulfide intermediate is the cysteine 235.

This sequence belongs to the MnmA/TRMU family.

It localises to the cytoplasm. The catalysed reaction is S-sulfanyl-L-cysteinyl-[protein] + uridine(34) in tRNA + AH2 + ATP = 2-thiouridine(34) in tRNA + L-cysteinyl-[protein] + A + AMP + diphosphate + H(+). Functionally, catalyzes the 2-thiolation of uridine at the wobble position (U34) of tRNA, leading to the formation of s(2)U34. The protein is tRNA-specific 2-thiouridylase MnmA of Caulobacter sp. (strain K31).